The sequence spans 1668 residues: Chitin synthase chs-2 (1668 aa).

Positions 1 to 19 are enriched in basic and acidic residues; the sequence is MMNTLDHRPLGRMETMEGK. Residues 1-51 form a disordered region; it reads MMNTLDHRPLGRMETMEGKPDEDEVPTSSNSDAKGKGYYYSSGTVPTDDST. Over 1–116 the chain is Cytoplasmic; the sequence is MMNTLDHRPL…HGFWHDASLQ (116 aa). A helical transmembrane segment spans residues 117 to 137; sequence VLKLATFLVLFLLTLGSAVVA. The Extracellular portion of the chain corresponds to 138 to 176; it reads KSTFILMTSAIGWGGQTITICNQVISEATQNTVKLKNAH. Residues 177–197 traverse the membrane as a helical segment; sequence VVKWVWATLLALSAPEALCFV. Over 198 to 212 the chain is Cytoplasmic; that stretch reads RSMHRTMFRNVKRPT. Residues 213–233 form a helical membrane-spanning segment; it reads FIQFVFVLIIETFHSIGVGIL. The Extracellular portion of the chain corresponds to 234–242; it reads VFRIFPDLD. Residues 243 to 263 traverse the membrane as a helical segment; sequence AVTAAQLTNAMCFVPAILSVI. The Cytoplasmic portion of the chain corresponds to 264–271; that stretch reads SRKPNKSA. Residues 272-292 traverse the membrane as a helical segment; it reads LLLVIIDFAAIAAQSSGFWAL. Over 293-301 the chain is Extracellular; it reads PMFLPNLQK. A helical membrane pass occupies residues 302–322; that stretch reads HLVAIPVSLTLISLAWWQNFV. At 323-347 the chain is on the cytoplasmic side; the sequence is HRDSVFPPVRTLAKFAQRLSERRSK. A helical membrane pass occupies residues 348 to 368; sequence TYAFVSLWKICIYVVCCFLFI. The Extracellular segment spans residues 369-487; the sequence is SSRMKIEDML…IYSNYVERNQ (119 aa). Residue asparagine 396 is glycosylated (N-linked (GlcNAc...) asparagine). A helical membrane pass occupies residues 488–508; sequence LTMAYDALWLVIFQFGAVFVC. The Cytoplasmic portion of the chain corresponds to 509–522; the sequence is YHSSKFACKVMMQR. A helical transmembrane segment spans residues 523–543; the sequence is MGFALPMALSVPVTVLLLSTN. The Extracellular segment spans residues 544–576; the sequence is CRMRQKDSCYGTNVLTVELFWQCNGASMSLADF. Residues 577-597 form a helical membrane-spanning segment; it reads ILTPQTWIWLCWLASQFWITI. At 598–1045 the chain is on the cytoplasmic side; that stretch reads HLWNPKHERL…ISIWYIIYQL (448 aa). A helical membrane pass occupies residues 1046–1066; that stretch reads VMLISSILGPGTIFVMIIGAI. At 1067–1074 the chain is on the extracellular side; that stretch reads SISFSIDT. A helical transmembrane segment spans residues 1075-1095; it reads LISLVIVSIPVVVFIVVCLTA. Residues 1096 to 1100 are Cytoplasmic-facing; it reads KPEHQ. Residues 1101-1121 traverse the membrane as a helical segment; the sequence is LICAQTIGAIFAMLMTAVVVG. The Extracellular segment spans residues 1122–1136; sequence TSLQLQKDGLLSPHS. The helical transmembrane segment at 1137–1157 threads the bilayer; sequence MFTVAVATSFLTAAILHPLEF. Threonine 1158 is a topological domain (cytoplasmic). Residues 1159–1179 traverse the membrane as a helical segment; that stretch reads CIIPGTIYFLAIPCMYMLLPI. Over 1180–1375 the chain is Extracellular; sequence YSVCNMHTVS…RAGLIAIRNS (196 aa). Residues 1192-1216 form a disordered region; sequence TREDPRPTEKNTLAKKTPGNLESGD. The stretch at 1280–1335 forms a coiled coil; it reads QIDKCSEADEDEQAEIEDALEMSNQSHAAKKNQKWKQAQSEAWLADKALKRAEREY. The N-linked (GlcNAc...) asparagine glycan is linked to asparagine 1303. The chain crosses the membrane as a helical span at residues 1376-1396; that stretch reads HTVYFLMINIVFIISVLVLQI. Residues 1397-1440 are Cytoplasmic-facing; that stretch reads HKDCLNIEWPLGPKFNHTVRPCYANHDDNQKEEVWVMTRLQLEP. A helical transmembrane segment spans residues 1441-1461; it reads IGLVFLIFFVSILVIQFLAML. Topologically, residues 1462-1668 are extracellular; it reads CHRFGTLAHI…SSGDVELRRF (207 aa). A disordered region spans residues 1625 to 1668; that stretch reads RLFTAQQDQNSPTSDGNRRKSNSRPWDQPTSSATSSGDVELRRF. Polar residues-rich tracts occupy residues 1628–1639 and 1647–1661; these read TAQQDQNSPTSD and SRPW…TSSG.

Belongs to the chitin synthase family. Class IV subfamily.

Its subcellular location is the cell membrane. It carries out the reaction [(1-&gt;4)-N-acetyl-beta-D-glucosaminyl](n) + UDP-N-acetyl-alpha-D-glucosamine = [(1-&gt;4)-N-acetyl-beta-D-glucosaminyl](n+1) + UDP + H(+). Functionally, may be involved in chitin synthesis in the pharynx during larval development. The protein is Chitin synthase chs-2 of Caenorhabditis elegans.